The sequence spans 214 residues: Phosphatidylserine decarboxylase proenzyme (214 aa).

The active-site Schiff-base intermediate with substrate; via pyruvic acid is S182. S182 carries the post-translational modification Pyruvic acid (Ser); by autocatalysis.

It belongs to the phosphatidylserine decarboxylase family. PSD-A subfamily. As to quaternary structure, heterodimer of a large membrane-associated beta subunit and a small pyruvoyl-containing alpha subunit. Pyruvate serves as cofactor. Is synthesized initially as an inactive proenzyme. Formation of the active enzyme involves a self-maturation process in which the active site pyruvoyl group is generated from an internal serine residue via an autocatalytic post-translational modification. Two non-identical subunits are generated from the proenzyme in this reaction, and the pyruvate is formed at the N-terminus of the alpha chain, which is derived from the carboxyl end of the proenzyme. The post-translation cleavage follows an unusual pathway, termed non-hydrolytic serinolysis, in which the side chain hydroxyl group of the serine supplies its oxygen atom to form the C-terminus of the beta chain, while the remainder of the serine residue undergoes an oxidative deamination to produce ammonia and the pyruvoyl prosthetic group on the alpha chain.

It localises to the cell membrane. The enzyme catalyses a 1,2-diacyl-sn-glycero-3-phospho-L-serine + H(+) = a 1,2-diacyl-sn-glycero-3-phosphoethanolamine + CO2. The protein operates within phospholipid metabolism; phosphatidylethanolamine biosynthesis; phosphatidylethanolamine from CDP-diacylglycerol: step 2/2. Functionally, catalyzes the formation of phosphatidylethanolamine (PtdEtn) from phosphatidylserine (PtdSer). This Burkholderia cenocepacia (strain ATCC BAA-245 / DSM 16553 / LMG 16656 / NCTC 13227 / J2315 / CF5610) (Burkholderia cepacia (strain J2315)) protein is Phosphatidylserine decarboxylase proenzyme.